A 393-amino-acid chain; its full sequence is uncharacterized protein (393 aa).

One can recognise a Flavodoxin-like domain in the interval 250-389; it reads AVIVYDTMYN…KCYEFGKRLA (140 aa).

This is an uncharacterized protein from Methanocaldococcus jannaschii (strain ATCC 43067 / DSM 2661 / JAL-1 / JCM 10045 / NBRC 100440) (Methanococcus jannaschii).